The following is a 297-amino-acid chain: N-acetylneuraminate lyase (297 aa).

Aceneuramate contacts are provided by Ser47 and Thr48. The active-site Proton donor is the Tyr137. Lys165 serves as the catalytic Schiff-base intermediate with substrate. 5 residues coordinate aceneuramate: Thr167, Gly189, Asp191, Glu192, and Ser208.

This sequence belongs to the DapA family. NanA subfamily. As to quaternary structure, homotetramer.

Its subcellular location is the cytoplasm. The catalysed reaction is aceneuramate = aldehydo-N-acetyl-D-mannosamine + pyruvate. It functions in the pathway amino-sugar metabolism; N-acetylneuraminate degradation; D-fructose 6-phosphate from N-acetylneuraminate: step 1/5. Its function is as follows. Catalyzes the reversible aldol cleavage of N-acetylneuraminic acid (sialic acid; Neu5Ac) to form pyruvate and N-acetylmannosamine (ManNAc) via a Schiff base intermediate. This Escherichia fergusonii (strain ATCC 35469 / DSM 13698 / CCUG 18766 / IAM 14443 / JCM 21226 / LMG 7866 / NBRC 102419 / NCTC 12128 / CDC 0568-73) protein is N-acetylneuraminate lyase.